We begin with the raw amino-acid sequence, 371 residues long: Histidinol-phosphate aminotransferase (371 aa).

N6-(pyridoxal phosphate)lysine is present on lysine 221.

It belongs to the class-II pyridoxal-phosphate-dependent aminotransferase family. Histidinol-phosphate aminotransferase subfamily. In terms of assembly, homodimer. It depends on pyridoxal 5'-phosphate as a cofactor.

The catalysed reaction is L-histidinol phosphate + 2-oxoglutarate = 3-(imidazol-4-yl)-2-oxopropyl phosphate + L-glutamate. The protein operates within amino-acid biosynthesis; L-histidine biosynthesis; L-histidine from 5-phospho-alpha-D-ribose 1-diphosphate: step 7/9. This chain is Histidinol-phosphate aminotransferase, found in Pseudoalteromonas atlantica (strain T6c / ATCC BAA-1087).